We begin with the raw amino-acid sequence, 144 residues long: Bacilliredoxin BCE33L1972 (144 aa).

The protein belongs to the bacilliredoxin family.

The protein is Bacilliredoxin BCE33L1972 of Bacillus cereus (strain ZK / E33L).